We begin with the raw amino-acid sequence, 161 residues long: Dihydrofolate reductase type 1 from Tn4003 (161 aa).

The region spanning 2–157 is the DHFR domain; the sequence is TLSIIVAHDK…IPHTFLHLVR (156 aa). 6-8 contacts substrate; it reads IVA. NADP(+) is bound by residues 7 to 8 and 15 to 20; these read VA and IGYQNQ. A substrate-binding site is contributed by aspartate 28. 44-47 contributes to the NADP(+) binding site; it reads ARKT. Arginine 58 is a substrate binding site. NADP(+) is bound by residues 63-66 and 93-98; these read LTNQ and FGGQTL. Threonine 112 contributes to the substrate binding site.

This sequence belongs to the dihydrofolate reductase family.

The enzyme catalyses (6S)-5,6,7,8-tetrahydrofolate + NADP(+) = 7,8-dihydrofolate + NADPH + H(+). Its pathway is cofactor biosynthesis; tetrahydrofolate biosynthesis; 5,6,7,8-tetrahydrofolate from 7,8-dihydrofolate: step 1/1. Its function is as follows. Key enzyme in folate metabolism. Catalyzes an essential reaction for de novo glycine and purine synthesis, and for DNA precursor synthesis. The protein is Dihydrofolate reductase type 1 from Tn4003 (dfrA) of Staphylococcus aureus.